The primary structure comprises 486 residues: Cardiolipin synthase A (486 aa).

The next 2 helical transmembrane spans lie at Thr-3–Val-23 and Met-38–Phe-58. 2 PLD phosphodiesterase domains span residues Met-219–Arg-246 and Glu-399–Ser-426. Catalysis depends on residues His-224, Lys-226, Asp-231, His-404, Lys-406, and Asp-411.

It belongs to the phospholipase D family. Cardiolipin synthase subfamily. ClsA sub-subfamily.

The protein localises to the cell inner membrane. It carries out the reaction 2 a 1,2-diacyl-sn-glycero-3-phospho-(1'-sn-glycerol) = a cardiolipin + glycerol. Its function is as follows. Catalyzes the reversible phosphatidyl group transfer from one phosphatidylglycerol molecule to another to form cardiolipin (CL) (diphosphatidylglycerol) and glycerol. The protein is Cardiolipin synthase A of Escherichia fergusonii (strain ATCC 35469 / DSM 13698 / CCUG 18766 / IAM 14443 / JCM 21226 / LMG 7866 / NBRC 102419 / NCTC 12128 / CDC 0568-73).